Reading from the N-terminus, the 286-residue chain is Beta-lactamase SHV-24 (286 aa).

The N-terminal stretch at Met1–Ala21 is a signal peptide. Ser66 functions as the Acyl-ester intermediate in the catalytic mechanism. Cys73 and Cys119 are joined by a disulfide. Residue Glu164 is the Proton acceptor of the active site. Residue Lys230–Gly232 participates in substrate binding.

The protein belongs to the class-A beta-lactamase family.

The enzyme catalyses a beta-lactam + H2O = a substituted beta-amino acid. Hydrolyzes ampicillin. Can also hydrolyze cephaloridine, aztreonam and ceftazidime with a low catalytic rate. In Escherichia coli, this protein is Beta-lactamase SHV-24 (bla).